A 518-amino-acid chain; its full sequence is uncharacterized protein (518 aa).

Its subcellular location is the virion. This is an uncharacterized protein from Acanthamoeba polyphaga (Amoeba).